We begin with the raw amino-acid sequence, 658 residues long: DNA mismatch repair protein MutL (658 aa).

The span at 114 to 130 (RQEDSSHATQVKAEDGK) shows a compositional bias: basic and acidic residues. Disordered stretches follow at residues 114 to 138 (RQED…TAAA) and 355 to 405 (PSEN…HSLS).

The protein belongs to the DNA mismatch repair MutL/HexB family.

Its function is as follows. This protein is involved in the repair of mismatches in DNA. It is required for dam-dependent methyl-directed DNA mismatch repair. May act as a 'molecular matchmaker', a protein that promotes the formation of a stable complex between two or more DNA-binding proteins in an ATP-dependent manner without itself being part of a final effector complex. The chain is DNA mismatch repair protein MutL from Neisseria gonorrhoeae (strain ATCC 700825 / FA 1090).